The primary structure comprises 472 residues: L-fuculokinase (472 aa).

This sequence belongs to the FGGY kinase family. A divalent metal cation serves as cofactor.

The catalysed reaction is L-fuculose + ATP = L-fuculose 1-phosphate + ADP + H(+). It functions in the pathway carbohydrate degradation; L-fucose degradation; L-lactaldehyde and glycerone phosphate from L-fucose: step 2/3. In terms of biological role, catalyzes the phosphorylation of L-fuculose. Can also phosphorylate, with lower efficiency, D-ribulose, D-xylulose and D-fructose. This chain is L-fuculokinase, found in Escherichia coli (strain K12).